The following is a 359-amino-acid chain: Probable tyrosine-protein phosphatase pir-2 (359 aa).

The region spanning 16–191 is the Tyrosine-protein phosphatase domain; that stretch reads QPVGNVIPRT…AKDKRDKQVD (176 aa). Catalysis depends on cysteine 131, which acts as the Phosphocysteine intermediate. Residues 184–199 show a composition bias toward basic and acidic residues; the sequence is DKRDKQVDSDSDSSER. Disordered regions lie at residues 184–211, 234–259, and 274–328; these read DKRD…KHRE, SVSG…PHHW, and PVAN…RNRM. Positions 200–210 are enriched in basic residues; it reads QRKKKNKRKHR. Polar residues predominate over residues 234–246; it reads SVSGTDYQNSPNG. The span at 290 to 309 shows a compositional bias: acidic residues; the sequence is PQEEEEFEEDFEEIEEETET. Positions 319–328 are enriched in basic residues; it reads SKRRARRNRM.

The protein belongs to the protein-tyrosine phosphatase family. Non-receptor class CDC14 subfamily.

It catalyses the reaction O-phospho-L-tyrosyl-[protein] + H2O = L-tyrosyl-[protein] + phosphate. This chain is Probable tyrosine-protein phosphatase pir-2, found in Caenorhabditis elegans.